The chain runs to 519 residues: Xylose import ATP-binding protein XylG (519 aa).

ABC transporter domains are found at residues 6–245 and 262–507; these read MTMR…VGRE and FEAR…IRPV. 38-45 serves as a coordination point for ATP; sequence GENGAGKS.

The protein belongs to the ABC transporter superfamily. Xylose importer (TC 3.A.1.2.4) family. As to quaternary structure, the complex is composed of two ATP-binding proteins (XylG), two transmembrane proteins (XylH) and a solute-binding protein (XylF).

The protein resides in the cell inner membrane. It catalyses the reaction D-xylose(out) + ATP + H2O = D-xylose(in) + ADP + phosphate + H(+). Part of the ABC transporter complex XylFGH involved in xylose import. Responsible for energy coupling to the transport system. This Paraburkholderia xenovorans (strain LB400) protein is Xylose import ATP-binding protein XylG.